A 279-amino-acid polypeptide reads, in one-letter code: Threonylcarbamoyl-AMP synthase (279 aa).

Residues 1–55 constitute a mitochondrion transit peptide; that stretch reads MSPARRCRGMRAAVAASVGLSEGPAGSRSGRLFRPPSPAPAAPGARLLRLPGSGA. The tract at residues 21–41 is disordered; it reads SEGPAGSRSGRLFRPPSPAPA. Ser-60 is subject to Phosphoserine. Positions 67-257 constitute a YrdC-like domain; the sequence is TEALRAAVAE…KFGIIRPGCA (191 aa).

The protein belongs to the SUA5 family. As to quaternary structure, interacts with RSC1A1. In terms of tissue distribution, ubiquitously expressed.

The protein localises to the cytoplasm. It is found in the mitochondrion. Its subcellular location is the cell membrane. The enzyme catalyses L-threonine + hydrogencarbonate + ATP = L-threonylcarbamoyladenylate + diphosphate + H2O. Cytoplasmic and mitochondrial threonylcarbamoyl-AMP synthase required for the formation of a threonylcarbamoyl group on adenosine at position 37 (t(6)A37) in tRNAs that read codons beginning with adenine. Catalyzes the conversion of L-threonine, HCO(3)(-)/CO(2) and ATP to give threonylcarbamoyl-AMP (TC-AMP) as the acyladenylate intermediate, with the release of diphosphate. Participates in t(6)A37 formation in cytoplasmic and mitochondrial tRNAs. May regulate the activity of some transporters. This Homo sapiens (Human) protein is Threonylcarbamoyl-AMP synthase.